A 267-amino-acid polypeptide reads, in one-letter code: Kafirin PSK8 (267 aa).

An N-terminal signal peptide occupies residues threonine 1–alanine 19.

The protein belongs to the zein family.

Functionally, major seed storage prolamin. The sequence is that of Kafirin PSK8 from Sorghum bicolor (Sorghum).